The sequence spans 865 residues: Alanine--tRNA ligase (865 aa).

Zn(2+)-binding residues include His568, His572, Cys670, and His674.

This sequence belongs to the class-II aminoacyl-tRNA synthetase family. Zn(2+) serves as cofactor.

The protein resides in the cytoplasm. The enzyme catalyses tRNA(Ala) + L-alanine + ATP = L-alanyl-tRNA(Ala) + AMP + diphosphate. Its function is as follows. Catalyzes the attachment of alanine to tRNA(Ala) in a two-step reaction: alanine is first activated by ATP to form Ala-AMP and then transferred to the acceptor end of tRNA(Ala). Also edits incorrectly charged Ser-tRNA(Ala) and Gly-tRNA(Ala) via its editing domain. The sequence is that of Alanine--tRNA ligase from Vibrio campbellii (strain ATCC BAA-1116).